The sequence spans 683 residues: DNA ligase 2 (683 aa).

NAD(+) is bound by residues 27 to 31, 76 to 77, and Glu106; these read DGEFD and SL. The N6-AMP-lysine intermediate role is filled by Lys108. NAD(+) is bound by residues Arg129, Glu169, Lys285, and Lys309. Positions 403, 406, 422, and 428 each coordinate Zn(2+). The BRCT domain maps to 592–681; sequence SIERTLEGLS…PAAVAAEEPE (90 aa).

This sequence belongs to the NAD-dependent DNA ligase family. LigA subfamily. Requires Mg(2+) as cofactor. The cofactor is Mn(2+).

The catalysed reaction is NAD(+) + (deoxyribonucleotide)n-3'-hydroxyl + 5'-phospho-(deoxyribonucleotide)m = (deoxyribonucleotide)n+m + AMP + beta-nicotinamide D-nucleotide.. In terms of biological role, DNA ligase that catalyzes the formation of phosphodiester linkages between 5'-phosphoryl and 3'-hydroxyl groups in double-stranded DNA using NAD as a coenzyme and as the energy source for the reaction. It is essential for DNA replication and repair of damaged DNA. This chain is DNA ligase 2, found in Nocardia farcinica (strain IFM 10152).